A 190-amino-acid polypeptide reads, in one-letter code: Calcium-binding protein NCS-1 (190 aa).

Gly2 carries the N-myristoyl glycine lipid modification. EF-hand domains lie at 40 to 58 (SGHL…FFPF), 60 to 95 (DPSA…TSRG), 96 to 131 (ELND…IYKM), and 144 to 179 (TPEK…DPTI). Positions 73, 75, 77, 79, 84, 109, 111, 113, 120, 157, 159, 161, 163, and 168 each coordinate Ca(2+).

The protein belongs to the recoverin family.

The protein localises to the membrane. Its function is as follows. Negatively regulates sporulation perhaps by controlling Ca(2+)-dependent desensitization of git3. The polypeptide is Calcium-binding protein NCS-1 (ncs1) (Schizosaccharomyces pombe (strain 972 / ATCC 24843) (Fission yeast)).